The primary structure comprises 1269 residues: Furin-like protease 1, isoforms 1/1-X/2 (1269 aa).

Positions 1-57 are disordered; that stretch reads MKNDVVRWSRQPTSNTTNSSSSSRSDSNSTHKHRSKSNKLNARQLGSNAARSCQQRS. Positions 13-28 are enriched in low complexity; it reads TSNTTNSSSSSRSDSN. N-linked (GlcNAc...) asparagine glycosylation is found at Asn-15, Asn-18, and Asn-28. The span at 38 to 57 shows a compositional bias: polar residues; that stretch reads NKLNARQLGSNAARSCQQRS. An N-linked (GlcNAc...) asparagine glycan is attached at Asn-108. A helical transmembrane segment spans residues 119 to 139; it reads VFLLALQFSAVVFLCNINVGF. A compositionally biased stretch (low complexity) spans 150 to 163; sequence SAGGSSPAAPSSAP. The segment at 150–187 is disordered; it reads SAGGSSPAAPSSAPSSPPTVAVPPPPPPSSALKVDPNG. A compositionally biased stretch (pro residues) spans 164–178; it reads SSPPTVAVPPPPPPS. An N-linked (GlcNAc...) asparagine glycan is attached at Asn-333. A Peptidase S8 domain is found at 340–654; that stretch reads MWYLNRGGGL…YGLMDAAEMV (315 aa). Active-site charge relay system residues include Asp-372 and His-413. A glycan (N-linked (GlcNAc...) asparagine) is linked at Asn-426. Cystine bridges form between Cys-430-Cys-579 and Cys-522-Cys-552. The Charge relay system role is filled by Ser-587. N-linked (GlcNAc...) asparagine glycosylation is present at Asn-606. In terms of domain architecture, P/Homo B spans 662-793; it reads AVPEQQRCEI…SLIFYGTTQS (132 aa). A disulfide bridge connects residues Cys-669 and Cys-695. Asn-727 and Asn-814 each carry an N-linked (GlcNAc...) asparagine glycan. Disordered stretches follow at residues 796–875, 891–1015, 1031–1050, and 1057–1083; these read PNDP…PPKQ, ANGK…NSRI, ELEP…AKQG, and LFKP…PSQT. Composition is skewed to low complexity over residues 811 to 821 and 835 to 851; these read TTPNSSSTTSN and PNNF…LPLG. Asn-857 carries N-linked (GlcNAc...) asparagine glycosylation. Over residues 858–868 the composition is skewed to polar residues; that stretch reads KSSYVTNNPLL. N-linked (GlcNAc...) asparagine glycosylation is found at Asn-897 and Asn-908. 2 stretches are compositionally biased toward low complexity: residues 905 to 915 and 929 to 940; these read NKGNKSNNGNK and TTQSTIIQTSTS. Positions 975-985 are enriched in basic and acidic residues; the sequence is KSYDEKSRKVV. Asn-994 is a glycosylation site (N-linked (GlcNAc...) asparagine). Over residues 1005 to 1014 the composition is skewed to polar residues; it reads ESTTTSSNSR. Polar residues predominate over residues 1062–1074; that stretch reads NGGNSRQGNTKKS. Residues 1233-1253 traverse the membrane as a helical segment; the sequence is LGLSLLFFMIMQVFFLNFKHA.

Belongs to the peptidase S8 family. Furin subfamily. Ca(2+) serves as cofactor. In adults, isoform 1-X is expressed in CNS, fat body and female reproductive tissues, and in embryos, in CNS, tracheal pits, hindgut, posterior spiracles and anal pads.

The protein resides in the golgi apparatus membrane. The catalysed reaction is Release of mature proteins from their proproteins by cleavage of -Arg-Xaa-Yaa-Arg-|-Zaa- bonds, where Xaa can be any amino acid and Yaa is Arg or Lys. Releases albumin, complement component C3 and von Willebrand factor from their respective precursors.. In terms of biological role, furin is likely to represent the ubiquitous endoprotease activity within constitutive secretory pathways and capable of cleavage at the RX(K/R)R consensus motif. The polypeptide is Furin-like protease 1, isoforms 1/1-X/2 (Fur1) (Drosophila melanogaster (Fruit fly)).